The following is a 273-amino-acid chain: Putative pyruvate, phosphate dikinase regulatory protein 2 (273 aa).

151–158 lines the ADP pocket; sequence GISRTSKT.

The protein belongs to the pyruvate, phosphate/water dikinase regulatory protein family. PDRP subfamily.

It carries out the reaction N(tele)-phospho-L-histidyl/L-threonyl-[pyruvate, phosphate dikinase] + ADP = N(tele)-phospho-L-histidyl/O-phospho-L-threonyl-[pyruvate, phosphate dikinase] + AMP + H(+). It catalyses the reaction N(tele)-phospho-L-histidyl/O-phospho-L-threonyl-[pyruvate, phosphate dikinase] + phosphate + H(+) = N(tele)-phospho-L-histidyl/L-threonyl-[pyruvate, phosphate dikinase] + diphosphate. Bifunctional serine/threonine kinase and phosphorylase involved in the regulation of the pyruvate, phosphate dikinase (PPDK) by catalyzing its phosphorylation/dephosphorylation. This chain is Putative pyruvate, phosphate dikinase regulatory protein 2, found in Staphylococcus saprophyticus subsp. saprophyticus (strain ATCC 15305 / DSM 20229 / NCIMB 8711 / NCTC 7292 / S-41).